A 192-amino-acid chain; its full sequence is Thymidine kinase (192 aa).

ATP contacts are provided by residues 9–16 (ASMNAGKS) and 87–90 (DEAQ). Glutamate 88 acts as the Proton acceptor in catalysis. 4 residues coordinate Zn(2+): cysteine 145, cysteine 147, cysteine 182, and histidine 185.

It belongs to the thymidine kinase family. In terms of assembly, homotetramer.

It localises to the cytoplasm. The catalysed reaction is thymidine + ATP = dTMP + ADP + H(+). This is Thymidine kinase from Novosphingobium aromaticivorans (strain ATCC 700278 / DSM 12444 / CCUG 56034 / CIP 105152 / NBRC 16084 / F199).